A 269-amino-acid chain; its full sequence is Formamidopyrimidine-DNA glycosylase (269 aa).

The active-site Schiff-base intermediate with DNA is P2. E3 acts as the Proton donor in catalysis. The active-site Proton donor; for beta-elimination activity is the K57. 3 residues coordinate DNA: H90, R109, and K150. The FPG-type zinc finger occupies 235-269 (QVYGRKGEPCRVCGTPIVATKHAQRATFYCRQCQK). Residue R259 is the Proton donor; for delta-elimination activity of the active site.

Belongs to the FPG family. As to quaternary structure, monomer. It depends on Zn(2+) as a cofactor.

It carries out the reaction Hydrolysis of DNA containing ring-opened 7-methylguanine residues, releasing 2,6-diamino-4-hydroxy-5-(N-methyl)formamidopyrimidine.. The enzyme catalyses 2'-deoxyribonucleotide-(2'-deoxyribose 5'-phosphate)-2'-deoxyribonucleotide-DNA = a 3'-end 2'-deoxyribonucleotide-(2,3-dehydro-2,3-deoxyribose 5'-phosphate)-DNA + a 5'-end 5'-phospho-2'-deoxyribonucleoside-DNA + H(+). Involved in base excision repair of DNA damaged by oxidation or by mutagenic agents. Acts as a DNA glycosylase that recognizes and removes damaged bases. Has a preference for oxidized purines, such as 7,8-dihydro-8-oxoguanine (8-oxoG). Has AP (apurinic/apyrimidinic) lyase activity and introduces nicks in the DNA strand. Cleaves the DNA backbone by beta-delta elimination to generate a single-strand break at the site of the removed base with both 3'- and 5'-phosphates. In Escherichia coli (strain K12 / MC4100 / BW2952), this protein is Formamidopyrimidine-DNA glycosylase.